We begin with the raw amino-acid sequence, 191 residues long: FAD-linked sulfhydryl oxidase ERV1 (191 aa).

The region spanning 72-172 is the ERV/ALR sulfhydryl oxidase domain; that stretch reads GPVTKEDLGR…FPCERVDARW (101 aa). The FAD site is built by lysine 76, arginine 81, tryptophan 84, glutamate 121, histidine 125, cysteine 148, histidine 151, asparagine 152, asparagine 155, lysine 160, and arginine 171. A disulfide bond links cysteine 119 and cysteine 122. A disulfide bridge connects residues cysteine 148 and cysteine 165. Residues cysteine 177 and cysteine 182 are joined by a disulfide bond. Positions 177 to 182 match the Required for dimerization and substrate specificity motif; sequence CEQKSC.

As to quaternary structure, homodimer. It depends on FAD as a cofactor. Post-translationally, contains three disulfide bonds; one catalytic disulfide (Cys-119 to Cys-122), one structural disulfide (Cys-148 to Cys-165), and one shuttle disulfide (Cys-177 to Cys-182).

It localises to the mitochondrion. It catalyses the reaction 2 R'C(R)SH + O2 = R'C(R)S-S(R)CR' + H2O2. Its function is as follows. FAD-dependent sulfhydryl oxidase that catalyzes disulfide bond formation. Oxidizes thioredoxin in vitro. Required for the import and folding of small cysteine-containing proteins in the mitochondrial intermembrane space, and can act independently of the oxidoreductase MIA40. Can oxidize the cytochrome c oxidase assembly protein COX19, a typical substrate of MIA40. This chain is FAD-linked sulfhydryl oxidase ERV1 (ERV1), found in Arabidopsis thaliana (Mouse-ear cress).